Here is a 293-residue protein sequence, read N- to C-terminus: Pseudouridine-5'-phosphate glycosidase (293 aa).

The active-site Proton donor is the Glu-21. Lys-81 and Val-101 together coordinate substrate. Asp-130 contacts Mn(2+). Residue 132-134 (SQD) participates in substrate binding. The active-site Nucleophile is the Lys-151.

The protein belongs to the pseudouridine-5'-phosphate glycosidase family. As to quaternary structure, homotrimer. Mn(2+) is required as a cofactor.

The catalysed reaction is D-ribose 5-phosphate + uracil = psi-UMP + H2O. Functionally, catalyzes the reversible cleavage of pseudouridine 5'-phosphate (PsiMP) to ribose 5-phosphate and uracil. Functions biologically in the cleavage direction, as part of a pseudouridine degradation pathway. The chain is Pseudouridine-5'-phosphate glycosidase from Thermosipho africanus (strain TCF52B).